A 439-amino-acid chain; its full sequence is Methylenetetrahydrofolate--tRNA-(uracil-5-)-methyltransferase TrmFO (439 aa).

9–14 (GAGLAG) is a binding site for FAD.

Belongs to the MnmG family. TrmFO subfamily. It depends on FAD as a cofactor.

It is found in the cytoplasm. It carries out the reaction uridine(54) in tRNA + (6R)-5,10-methylene-5,6,7,8-tetrahydrofolate + NADH + H(+) = 5-methyluridine(54) in tRNA + (6S)-5,6,7,8-tetrahydrofolate + NAD(+). The enzyme catalyses uridine(54) in tRNA + (6R)-5,10-methylene-5,6,7,8-tetrahydrofolate + NADPH + H(+) = 5-methyluridine(54) in tRNA + (6S)-5,6,7,8-tetrahydrofolate + NADP(+). Its function is as follows. Catalyzes the folate-dependent formation of 5-methyl-uridine at position 54 (M-5-U54) in all tRNAs. This is Methylenetetrahydrofolate--tRNA-(uracil-5-)-methyltransferase TrmFO from Lactobacillus delbrueckii subsp. bulgaricus (strain ATCC BAA-365 / Lb-18).